The chain runs to 118 residues: Large ribosomal subunit protein bL20 (118 aa).

The protein belongs to the bacterial ribosomal protein bL20 family.

Binds directly to 23S ribosomal RNA and is necessary for the in vitro assembly process of the 50S ribosomal subunit. It is not involved in the protein synthesizing functions of that subunit. This Bacillus mycoides (strain KBAB4) (Bacillus weihenstephanensis) protein is Large ribosomal subunit protein bL20.